The following is a 198-amino-acid chain: Protein GrpE (198 aa).

Over residues 1–14 (MSNEENKINEEALK) the composition is skewed to basic and acidic residues. Residues 1-20 (MSNEENKINEEALKQQDAAE) are disordered.

This sequence belongs to the GrpE family. Homodimer.

The protein localises to the cytoplasm. Participates actively in the response to hyperosmotic and heat shock by preventing the aggregation of stress-denatured proteins, in association with DnaK and GrpE. It is the nucleotide exchange factor for DnaK and may function as a thermosensor. Unfolded proteins bind initially to DnaJ; upon interaction with the DnaJ-bound protein, DnaK hydrolyzes its bound ATP, resulting in the formation of a stable complex. GrpE releases ADP from DnaK; ATP binding to DnaK triggers the release of the substrate protein, thus completing the reaction cycle. Several rounds of ATP-dependent interactions between DnaJ, DnaK and GrpE are required for fully efficient folding. The protein is Protein GrpE of Vibrio vulnificus (strain YJ016).